The sequence spans 529 residues: Bifunctional purine biosynthesis protein PurH (529 aa).

One can recognise an MGS-like domain in the interval 1–148 (MNNARPIRRA…KNHKDTTIIV (148 aa)).

It belongs to the PurH family.

The catalysed reaction is (6R)-10-formyltetrahydrofolate + 5-amino-1-(5-phospho-beta-D-ribosyl)imidazole-4-carboxamide = 5-formamido-1-(5-phospho-D-ribosyl)imidazole-4-carboxamide + (6S)-5,6,7,8-tetrahydrofolate. The enzyme catalyses IMP + H2O = 5-formamido-1-(5-phospho-D-ribosyl)imidazole-4-carboxamide. It functions in the pathway purine metabolism; IMP biosynthesis via de novo pathway; 5-formamido-1-(5-phospho-D-ribosyl)imidazole-4-carboxamide from 5-amino-1-(5-phospho-D-ribosyl)imidazole-4-carboxamide (10-formyl THF route): step 1/1. It participates in purine metabolism; IMP biosynthesis via de novo pathway; IMP from 5-formamido-1-(5-phospho-D-ribosyl)imidazole-4-carboxamide: step 1/1. This Shewanella pealeana (strain ATCC 700345 / ANG-SQ1) protein is Bifunctional purine biosynthesis protein PurH.